We begin with the raw amino-acid sequence, 274 residues long: MAIHLYKTSTPSTRNGTVDSQVKSNPRNNLIYGQRRCGKGRNARGIITARHRGGGHKRLYRKIDFRRNEKDIYGRIVTIEYDPNRNAYICLIHYGDGEKRYILHPRGAIIGDTIVSGTEVPIKMGNALPLTDMPLGTAIHNIEITLGKGGQLARAAGAVAKLIAKEGKSATLKLPSGEVRLISKNCSATVGQVGNVGVNQKSLGRAGSKRWLGKRPVVRGVVMNPVDHPHGGGEGRAPIGRKKPTTPWGYPALGRRSRKRNKYSDNLILRRRSK.

Disordered stretches follow at residues 1–25 (MAIH…VKSN) and 224–274 (NPVD…RRSK). The span at 7-25 (KTSTPSTRNGTVDSQVKSN) shows a compositional bias: polar residues.

The protein belongs to the universal ribosomal protein uL2 family. As to quaternary structure, part of the 50S ribosomal subunit.

It is found in the plastid. Its subcellular location is the chloroplast. This Atropa belladonna (Belladonna) protein is Large ribosomal subunit protein uL2cz (rpl2-A).